The following is a 492-amino-acid chain: Glutamyl-tRNA(Gln) amidotransferase subunit B, mitochondrial (492 aa).

This sequence belongs to the GatB/GatE family. GatB subfamily. As to quaternary structure, subunit of the heterotrimeric GatFAB amidotransferase (AdT) complex, composed of A, B and F subunits.

The protein localises to the mitochondrion. The catalysed reaction is L-glutamyl-tRNA(Gln) + L-glutamine + ATP + H2O = L-glutaminyl-tRNA(Gln) + L-glutamate + ADP + phosphate + H(+). Its function is as follows. Allows the formation of correctly charged Gln-tRNA(Gln) through the transamidation of misacylated Glu-tRNA(Gln) in the mitochondria. The reaction takes place in the presence of glutamine and ATP through an activated gamma-phospho-Glu-tRNA(Gln). The chain is Glutamyl-tRNA(Gln) amidotransferase subunit B, mitochondrial from Komagataella phaffii (strain GS115 / ATCC 20864) (Yeast).